The following is a 484-amino-acid chain: Xylulose kinase (484 aa).

A substrate-binding site is contributed by 77-78 (MH). D233 acts as the Proton acceptor in catalysis.

This sequence belongs to the FGGY kinase family. Homodimer.

The enzyme catalyses D-xylulose + ATP = D-xylulose 5-phosphate + ADP + H(+). It carries out the reaction 1-deoxy-D-xylulose + ATP = 1-deoxy-D-xylulose 5-phosphate + ADP + H(+). Its activity is regulated as follows. Sugar binding is accompanied by a dramatic hinge-bending movement that enhances interactions with Mg-ATP. In terms of biological role, catalyzes the phosphorylation of D-xylulose to D-xylulose 5-phosphate. Also catalyzes the phosphorylation of 1-deoxy-D-xylulose to 1-deoxy-D-xylulose 5-phosphate, with lower efficiency. Can also use D-ribulose, xylitol and D-arabitol, but D-xylulose is preferred over the other substrates. Has a weak substrate-independent Mg-ATP-hydrolyzing activity. The chain is Xylulose kinase from Escherichia coli (strain K12).